A 133-amino-acid polypeptide reads, in one-letter code: ATP synthase epsilon chain (133 aa).

The tract at residues 81 to 110 (AAERPEQIDTERARKAKERAEQRLASEHVD) is disordered.

The protein belongs to the ATPase epsilon chain family. As to quaternary structure, F-type ATPases have 2 components, CF(1) - the catalytic core - and CF(0) - the membrane proton channel. CF(1) has five subunits: alpha(3), beta(3), gamma(1), delta(1), epsilon(1). CF(0) has three main subunits: a, b and c.

It is found in the cell membrane. Produces ATP from ADP in the presence of a proton gradient across the membrane. This chain is ATP synthase epsilon chain, found in Shouchella clausii (strain KSM-K16) (Alkalihalobacillus clausii).